The sequence spans 403 residues: Phosphoglycerate kinase (403 aa).

Residues 21–23 (DFN), Arg36, 59–62 (HLGR), Arg119, and Arg154 contribute to the substrate site. ATP-binding positions include Lys207, Gly299, Glu330, and 357–360 (GGDA).

It belongs to the phosphoglycerate kinase family. Monomer.

It localises to the cytoplasm. It catalyses the reaction (2R)-3-phosphoglycerate + ATP = (2R)-3-phospho-glyceroyl phosphate + ADP. It participates in carbohydrate degradation; glycolysis; pyruvate from D-glyceraldehyde 3-phosphate: step 2/5. The polypeptide is Phosphoglycerate kinase (Chlamydia abortus (strain DSM 27085 / S26/3) (Chlamydophila abortus)).